Consider the following 185-residue polypeptide: GTP cyclohydrolase 1 (185 aa).

Zn(2+)-binding residues include Cys76, His79, and Cys147.

The protein belongs to the GTP cyclohydrolase I family. Toroid-shaped homodecamer, composed of two pentamers of five dimers.

It catalyses the reaction GTP + H2O = 7,8-dihydroneopterin 3'-triphosphate + formate + H(+). It functions in the pathway cofactor biosynthesis; 7,8-dihydroneopterin triphosphate biosynthesis; 7,8-dihydroneopterin triphosphate from GTP: step 1/1. This is GTP cyclohydrolase 1 from Clostridium perfringens (strain ATCC 13124 / DSM 756 / JCM 1290 / NCIMB 6125 / NCTC 8237 / Type A).